Reading from the N-terminus, the 598-residue chain is Sulfoacetaldehyde acetyltransferase (598 aa).

Belongs to the TPP enzyme family. Homotetramer. Requires Mg(2+) as cofactor. Thiamine diphosphate is required as a cofactor.

Its subcellular location is the cytoplasm. It catalyses the reaction acetyl phosphate + sulfite + H(+) = sulfoacetaldehyde + phosphate. It functions in the pathway organosulfur degradation; taurine degradation via aerobic pathway; acetyl phosphate and sulfite from taurine: step 2/2. This Castellaniella defragrans (Alcaligenes defragrans) protein is Sulfoacetaldehyde acetyltransferase.